Reading from the N-terminus, the 585-residue chain is MRKTKIVCTIGPASESVEKLTQLMEAGMNVARLNFSHGDFEEHGARIKNIREAAGKLGKDIGILLDTKGPEIRTHTMENGSIELAAGSQLIVSMDEVIGTPDKISVTYDGLIHDVSVGSTILLDDGLVGLEVTDINKDKREIVTKVMNSGTLKNKKGVNVPGVSVNLPGITEKDANDIVFGIEQGVDFIAASFVRRPSDVLEIRELLEEHNAADIQIIPKIENQEGVDNIDAILEVSDGLMVARGDLGVEIPAEEVPLVQKELIKKCNALGKPVITATQMLDSMQRNPRPTRAEASDVANAIFDGTDAIMLSGETAAGNYPVEAVQTMHNIASRSEEALNHKKILSARSKQVSMSITDAIGQSVAHTAINLDVNAIVTPTESGHTARMISKYRPQAPIVAVTVNDAVSRKLSLVFGVFATSGQNHSSTDEMLEKAVQKSLDTGIVRHGDLIVITAGAVGEAGTTNLMKVYVVGDVVAKGQGIGRKSAFGEVVIAQNAQEAAKKMKDGAVLVTKSTDRDMMASLEKAAALITEEGGLTSHAAVVGLSLGIPVIVGMENATSILKEGEDITVDSARGAVYKGRASVL.

Arg-32 contributes to the substrate binding site. K(+)-binding residues include Asn-34, Ser-36, Asp-66, and Thr-67. Residue 34-37 (NFSH) participates in ATP binding. ATP-binding residues include Arg-73 and Lys-156. A Mg(2+)-binding site is contributed by Glu-222. 3 residues coordinate substrate: Gly-245, Asp-246, and Thr-278. A Mg(2+)-binding site is contributed by Asp-246.

Belongs to the pyruvate kinase family. It in the C-terminal section; belongs to the PEP-utilizing enzyme family. As to quaternary structure, homotetramer. Requires Mg(2+) as cofactor. It depends on K(+) as a cofactor.

It carries out the reaction pyruvate + ATP = phosphoenolpyruvate + ADP + H(+). It participates in carbohydrate degradation; glycolysis; pyruvate from D-glyceraldehyde 3-phosphate: step 5/5. This Bacillus licheniformis protein is Pyruvate kinase (pyk).